Consider the following 245-residue polypeptide: DNA repair protein RecO (245 aa).

Belongs to the RecO family.

Its function is as follows. Involved in DNA repair and RecF pathway recombination. The polypeptide is DNA repair protein RecO (Pectobacterium atrosepticum (strain SCRI 1043 / ATCC BAA-672) (Erwinia carotovora subsp. atroseptica)).